The primary structure comprises 343 residues: Phospholipid phosphatase-related protein type 2 (343 aa).

The next 3 membrane-spanning stretches (helical) occupy residues 12–32 (FSII…VVLL), 72–92 (ALIY…GELA), and 129–149 (FLGV…AGQV). A glycan (N-linked (GlcNAc...) asparagine) is linked at Asn165. The next 3 helical transmembrane spans lie at 210–230 (AALC…VFRV), 239–259 (SLCL…VAEY), and 266–286 (VLAG…CVVH). Residues 291-343 (RPHSGRRLSPWEDLSQAPTMDSPLEKNPRPAGRIRHRHGSPHPSRRTVPAVAT) form a disordered region. Phosphoserine is present on residues Ser299 and Ser312. Residues 322–335 (GRIRHRHGSPHPSR) are compositionally biased toward basic residues.

The protein belongs to the PA-phosphatase related phosphoesterase family.

Its subcellular location is the membrane. The sequence is that of Phospholipid phosphatase-related protein type 2 from Mus musculus (Mouse).